A 228-amino-acid chain; its full sequence is Response regulator SaeR (228 aa).

Positions histidine 3–leucine 116 constitute a Response regulatory domain. Aspartate 51 carries the 4-aspartylphosphate modification. The segment at residues valine 127–arginine 226 is a DNA-binding region (ompR/PhoB-type).

In terms of processing, phosphorylated by SaeS.

Its subcellular location is the cytoplasm. Its function is as follows. Member of the two-component regulatory system SaeR/SaeS involved in the regulation of staphylococcal virulence factors in a strain-dependent fashion. Probably functions as a transcriptional regulator via a specific DNA-binding domain, recognizing motifs near the promoter sequences of target genes. This is Response regulator SaeR (saeR) from Staphylococcus aureus (strain USA300).